The chain runs to 360 residues: SUN domain-containing protein 3 (360 aa).

Over residues 1–10 (MSGRPNSRGS) the composition is skewed to polar residues. Residues 1 to 39 (MSGRPNSRGSSRLFRAPSEDASSGSSGSAVLPQEENPNA) are disordered. Residues 1–47 (MSGRPNSRGSSRLFRAPSEDASSGSSGSAVLPQEENPNASGLTRSWK) are Nuclear-facing. The helical transmembrane segment at 48 to 67 (AVMGMVFILTLLLLGFINHM) threads the bilayer. The Perinuclear space portion of the chain corresponds to 68–360 (KLKEKAFPQK…RVHGTPKDDS (293 aa)). A coiled-coil region spans residues 103–142 (KEQLELLKKESQTLENNFREILFLIEQIDVLKALLRDMQD). In terms of domain architecture, SUN spans 196-357 (GASVVEAGTS…YRFRVHGTPK (162 aa)).

In terms of assembly, self-associates. Interacts with SYNE1 and SPAG4/SUN4. Proposed to form a spermatogenesis-specific LINC complex with SYNE1 during sperm head formation possibly implicating a SUN domain-based heterotrimer with SPAG4/SUN4 associating with SYNE1.

Its subcellular location is the membrane. It is found in the nucleus envelope. The protein resides in the nucleus inner membrane. As a probable component of the LINC (LInker of Nucleoskeleton and Cytoskeleton) complex, involved in the connection between the nuclear lamina and the cytoskeleton. The nucleocytoplasmic interactions established by the LINC complex play an important role in the transmission of mechanical forces across the nuclear envelope and in nuclear movement and positioning. May be involved in nuclear remodeling during sperm head formation in spermatogenesis. A probable SUN3:SYNE1 LINC complex may tether spermatid nuclei to posterior cytoskeletal structures such as the manchette. This chain is SUN domain-containing protein 3 (SUN3), found in Bos taurus (Bovine).